The chain runs to 302 residues: Proteasome subunit beta (302 aa).

Positions 1 to 10 are enriched in basic and acidic residues; it reads MAGRVREVSH. The disordered stretch occupies residues 1–21; the sequence is MAGRVREVSHSSDQSGRLPAA. The propeptide at 1 to 67 is removed in mature form; by autocatalysis; it reads MAGRVREVSH…GPGAGEPPHA (67 aa). Threonine 68 functions as the Nucleophile in the catalytic mechanism. Residues 283-302 are disordered; the sequence is RRGNPGGNPGISAVHGDGGN.

Belongs to the peptidase T1B family. In terms of assembly, the 20S proteasome core is composed of 14 alpha and 14 beta subunits that assemble into four stacked heptameric rings, resulting in a barrel-shaped structure. The two inner rings, each composed of seven catalytic beta subunits, are sandwiched by two outer rings, each composed of seven alpha subunits. The catalytic chamber with the active sites is on the inside of the barrel. Has a gated structure, the ends of the cylinder being occluded by the N-termini of the alpha-subunits. Is capped by the proteasome-associated ATPase, ARC.

The protein resides in the cytoplasm. It catalyses the reaction Cleavage of peptide bonds with very broad specificity.. The protein operates within protein degradation; proteasomal Pup-dependent pathway. The formation of the proteasomal ATPase ARC-20S proteasome complex, likely via the docking of the C-termini of ARC into the intersubunit pockets in the alpha-rings, may trigger opening of the gate for substrate entry. Interconversion between the open-gate and close-gate conformations leads to a dynamic regulation of the 20S proteasome proteolysis activity. Functionally, component of the proteasome core, a large protease complex with broad specificity involved in protein degradation. This chain is Proteasome subunit beta, found in Kineococcus radiotolerans (strain ATCC BAA-149 / DSM 14245 / SRS30216).